Reading from the N-terminus, the 34-residue chain is Colipase (34 aa).

2 disulfide bridges follow: Cys12/Cys23 and Cys18/Cys34.

Belongs to the colipase family. Forms a 1:1 stoichiometric complex with pancreatic lipase. As to expression, expressed by the pancreas.

Its subcellular location is the secreted. Colipase is a cofactor of pancreatic lipase. It allows the lipase to anchor itself to the lipid-water interface. Without colipase the enzyme is washed off by bile salts, which have an inhibitory effect on the lipase. This chain is Colipase (CLPS), found in Gallus gallus (Chicken).